We begin with the raw amino-acid sequence, 88 residues long: Regulatory protein AriR (88 aa).

Belongs to the AriR family. Homodimer.

In terms of biological role, regulates expression of genes involved in acid-resistance and biofilm formation. May be a non-specific DNA-binding protein that binds genes and/or intergenic regions via a geometric recognition. The sequence is that of Regulatory protein AriR (ariR) from Escherichia coli O1:K1 / APEC.